Here is a 192-residue protein sequence, read N- to C-terminus: Orotate phosphoribosyltransferase (192 aa).

116-124 (EDIVTTGLS) provides a ligand contact to 5-phospho-alpha-D-ribose 1-diphosphate. Orotate contacts are provided by threonine 120 and arginine 148.

This sequence belongs to the purine/pyrimidine phosphoribosyltransferase family. PyrE subfamily. In terms of assembly, homodimer. The cofactor is Mg(2+).

The catalysed reaction is orotidine 5'-phosphate + diphosphate = orotate + 5-phospho-alpha-D-ribose 1-diphosphate. It participates in pyrimidine metabolism; UMP biosynthesis via de novo pathway; UMP from orotate: step 1/2. Its function is as follows. Catalyzes the transfer of a ribosyl phosphate group from 5-phosphoribose 1-diphosphate to orotate, leading to the formation of orotidine monophosphate (OMP). This Brucella anthropi (strain ATCC 49188 / DSM 6882 / CCUG 24695 / JCM 21032 / LMG 3331 / NBRC 15819 / NCTC 12168 / Alc 37) (Ochrobactrum anthropi) protein is Orotate phosphoribosyltransferase.